A 188-amino-acid polypeptide reads, in one-letter code: UPF0488 protein C8orf33 homolog (188 aa).

Disordered stretches follow at residues 1-65 (MAAP…AEAQ), 87-112 (QRPT…TPLP), and 144-182 (AHSA…RDEE). N-acetylalanine is present on A2. S41 carries the phosphoserine modification. Residues 166–182 (PRPEGRSKGTSDTRDEE) show a composition bias toward basic and acidic residues.

This sequence belongs to the UPF0488 family.

This Bos taurus (Bovine) protein is UPF0488 protein C8orf33 homolog.